The chain runs to 129 residues: Glycine cleavage system H protein (129 aa).

One can recognise a Lipoyl-binding domain in the interval 24–106 (SYTVGITEHA…FGDGWFFRVM (83 aa)). Lys65 is subject to N6-lipoyllysine.

The protein belongs to the GcvH family. In terms of assembly, the glycine cleavage system is composed of four proteins: P, T, L and H. Requires (R)-lipoate as cofactor.

In terms of biological role, the glycine cleavage system catalyzes the degradation of glycine. The H protein shuttles the methylamine group of glycine from the P protein to the T protein. This Shewanella frigidimarina (strain NCIMB 400) protein is Glycine cleavage system H protein.